The primary structure comprises 510 residues: Probable cytosol aminopeptidase (510 aa).

Residues K282 and D287 each contribute to the Mn(2+) site. The active site involves K294. Residues D305, D364, and E366 each coordinate Mn(2+). R368 is an active-site residue.

This sequence belongs to the peptidase M17 family. It depends on Mn(2+) as a cofactor.

The protein resides in the cytoplasm. The enzyme catalyses Release of an N-terminal amino acid, Xaa-|-Yaa-, in which Xaa is preferably Leu, but may be other amino acids including Pro although not Arg or Lys, and Yaa may be Pro. Amino acid amides and methyl esters are also readily hydrolyzed, but rates on arylamides are exceedingly low.. The catalysed reaction is Release of an N-terminal amino acid, preferentially leucine, but not glutamic or aspartic acids.. Functionally, presumably involved in the processing and regular turnover of intracellular proteins. Catalyzes the removal of unsubstituted N-terminal amino acids from various peptides. This Cupriavidus pinatubonensis (strain JMP 134 / LMG 1197) (Cupriavidus necator (strain JMP 134)) protein is Probable cytosol aminopeptidase.